Here is a 144-residue protein sequence, read N- to C-terminus: Large ribosomal subunit protein uL15 (144 aa).

The segment at 1–58 is disordered; that stretch reads MRLNTLSPAAGSKPSKKRVGRGIGSGLGKTGGRGHKGQKSRSGGSVRPGFEGGQMPLK. Positions 21 to 31 are enriched in gly residues; sequence RGIGSGLGKTG.

This sequence belongs to the universal ribosomal protein uL15 family. In terms of assembly, part of the 50S ribosomal subunit.

Its function is as follows. Binds to the 23S rRNA. This is Large ribosomal subunit protein uL15 from Vibrio atlanticus (strain LGP32) (Vibrio splendidus (strain Mel32)).